Here is a 260-residue protein sequence, read N- to C-terminus: ATP synthase subunit a (260 aa).

The propeptide at 1 to 11 (MQNTLLRTYIN) is removed in mature form. 6 helical membrane passes run 37 to 57 (ITTF…LYVL), 96 to 116 (YFPF…ISMI), 126 to 146 (FVFI…LSLF), 152 to 172 (FFSL…LVVI), 192 to 212 (IFSG…FVQI), and 217 to 237 (LILG…EFGI).

Belongs to the ATPase A chain family. As to quaternary structure, F-type ATPases have 2 components, CF(1) - the catalytic core - and CF(0) - the membrane proton channel. CF(1) has five subunits: alpha(3), beta(3), gamma(1), delta(1), epsilon(1). CF(0) has three main subunits: a, b and c.

It localises to the mitochondrion inner membrane. Its function is as follows. Mitochondrial membrane ATP synthase (F(1)F(0) ATP synthase or Complex V) produces ATP from ADP in the presence of a proton gradient across the membrane which is generated by electron transport complexes of the respiratory chain. F-type ATPases consist of two structural domains, F(1) - containing the extramembraneous catalytic core and F(0) - containing the membrane proton channel, linked together by a central stalk and a peripheral stalk. During catalysis, ATP synthesis in the catalytic domain of F(1) is coupled via a rotary mechanism of the central stalk subunits to proton translocation. Key component of the proton channel; it may play a direct role in the translocation of protons across the membrane. The polypeptide is ATP synthase subunit a (ATP6) (Candida glabrata (strain ATCC 2001 / BCRC 20586 / JCM 3761 / NBRC 0622 / NRRL Y-65 / CBS 138) (Yeast)).